We begin with the raw amino-acid sequence, 581 residues long: Protein SPT2 homolog (581 aa).

Low complexity predominate over residues 26-35 (YYSTKYSPPK). Disordered regions lie at residues 26-50 (YYST…NIQK) and 145-495 (QEDK…EYDS). A coiled-coil region spans residues 36–76 (KQSKESKQLSSNIQKFLQKKEAEEAEKKRLERQKLNDLLAK). Residues 162–181 (SGTKERVKAAITREREEAKG) are compositionally biased toward basic and acidic residues. Composition is skewed to polar residues over residues 182–197 (NTRQ…SSAT) and 204–213 (VARSYSTSKT). 2 stretches are compositionally biased toward basic and acidic residues: residues 218–236 (NAEK…EQRR) and 256–312 (LAEK…KETP). Positions 276–307 (ERLLSAREKRELEERQRQQEQRAQRLKMRESE) form a coiled coil. The span at 352 to 376 (SSASSTSLSSSNSHSSASRSSVSSS) shows a compositional bias: low complexity. A compositionally biased stretch (polar residues) spans 447 to 461 (TRQTPSSDVQRSQGG). The segment covering 486–495 (DDDDEDEYDS) has biased composition (acidic residues).

It belongs to the SPT2 family.

The protein is Protein SPT2 homolog of Drosophila melanogaster (Fruit fly).